Reading from the N-terminus, the 35-residue chain is Basic endochitinase CH1 (35 aa).

Belongs to the glycosyl hydrolase 19 family. Chitinase class I subfamily.

It carries out the reaction Random endo-hydrolysis of N-acetyl-beta-D-glucosaminide (1-&gt;4)-beta-linkages in chitin and chitodextrins.. Defense against chitin-containing fungal pathogens. The protein is Basic endochitinase CH1 of Castanea sativa (Sweet chestnut).